Here is a 218-residue protein sequence, read N- to C-terminus: N-alpha-acetyltransferase 11 (218 aa).

Residues 1–58 (MNIRNARPDDLMNMQHCNLLCLPENYQMKYYFYHGLSWPQLSYIAEDEDGKIVGYVLA) form an interaction with NAA15 region. The N-acetyltransferase domain occupies 1 to 152 (MNIRNARPDD…DAYAMKRDLS (152 aa)). The interval 175–218 (EETQGGTLPDAGEACLPKNPTSKDSGSSDSTDVQDSSEDLDSIS) is disordered. Residues 196–205 (SKDSGSSDST) show a composition bias toward low complexity. The segment covering 209-218 (DSSEDLDSIS) has biased composition (acidic residues).

Belongs to the acetyltransferase family. ARD1 subfamily. As to quaternary structure, component of the N-terminal acetyltransferase A (NatA) complex composed of NAA11 and NAA15. Interacts with HIF1A.

The protein localises to the cytoplasm. It is found in the nucleus. It catalyses the reaction N-terminal glycyl-[protein] + acetyl-CoA = N-terminal N(alpha)-acetylglycyl-[protein] + CoA + H(+). The catalysed reaction is N-terminal L-alanyl-[protein] + acetyl-CoA = N-terminal N(alpha)-acetyl-L-alanyl-[protein] + CoA + H(+). It carries out the reaction N-terminal L-seryl-[protein] + acetyl-CoA = N-terminal N(alpha)-acetyl-L-seryl-[protein] + CoA + H(+). The enzyme catalyses N-terminal L-valyl-[protein] + acetyl-CoA = N-terminal N(alpha)-acetyl-L-valyl-[protein] + CoA + H(+). It catalyses the reaction N-terminal L-cysteinyl-[protein] + acetyl-CoA = N-terminal N(alpha)-acetyl-L-cysteinyl-[protein] + CoA + H(+). The catalysed reaction is N-terminal L-threonyl-[protein] + acetyl-CoA = N-terminal N(alpha)-acetyl-L-threonyl-[protein] + CoA + H(+). In terms of biological role, displays alpha (N-terminal) acetyltransferase activity. Proposed alternative catalytic subunit of the N-terminal acetyltransferase A (NatA) complex. This Mus musculus (Mouse) protein is N-alpha-acetyltransferase 11 (Naa11).